The sequence spans 358 residues: Short chain dehydrogenase sor7 (358 aa).

Residues 1–22 form a disordered region; sequence MSSPAIGQPPIPPTPTDANISG. Residues L34, D88, N115, Y206, K210, V238, and T240 each contribute to the NADP(+) site. The Proton donor role is filled by Y206. The Lowers pKa of active site Tyr role is filled by K210.

The protein belongs to the short-chain dehydrogenases/reductases (SDR) family.

It participates in secondary metabolite biosynthesis. Its function is as follows. Short chain dehydrogenase; part of the SOR gene cluster that mediates the biosynthesis of sorbicillinoids, a diverse group of yellow secondary metabolites that restrict growth of competing pathogenic fungi but not of bacteria. Sorbicillinoids biosynthesis requires the action of two PKSs. The SOR cluster is required for the production of trichodimerol and dihydrotrichotetronin, with sor2 being sufficient for production of trichodimerol, but not dihydrotrichotetronin in the light. Sor1 iteratively combines three acetyl units and the growing chain is modified by the ketoacyl reductase subunit, and optional by the enoyl reductase subunit in the second cycle. The polyketide is then handed over to the PKS sor2, which adds three more acetyl units, and two methyl groups. Sor2 releases an aldehyde, which undergoes spontaneous cyclization resulting in the formation of sorbicillin or 2',3'-dihydrosorbicillin. The monooxygenase sor5 oxidizes sorbicillin and 2',3'-dihydrosorbicillin to 2',3'-dihydrosorbicillinol and sorbicillinol, respectively. The oxidoreductase sor8 further converts sorbicillinol into oxosorbicillinol. Sorbicillinol is the building block for the other sorbicillinoids such as disorbicillinol, bisvertinolon, dihydrobisvertinolone, and dihydrotrichotetronine. The sequence is that of Short chain dehydrogenase sor7 from Hypocrea jecorina (strain QM6a) (Trichoderma reesei).